The sequence spans 458 residues: Exodeoxyribonuclease 7 large subunit (458 aa).

Belongs to the XseA family. Heterooligomer composed of large and small subunits.

It localises to the cytoplasm. It catalyses the reaction Exonucleolytic cleavage in either 5'- to 3'- or 3'- to 5'-direction to yield nucleoside 5'-phosphates.. Functionally, bidirectionally degrades single-stranded DNA into large acid-insoluble oligonucleotides, which are then degraded further into small acid-soluble oligonucleotides. This is Exodeoxyribonuclease 7 large subunit from Halalkalibacterium halodurans (strain ATCC BAA-125 / DSM 18197 / FERM 7344 / JCM 9153 / C-125) (Bacillus halodurans).